We begin with the raw amino-acid sequence, 275 residues long: NH(3)-dependent NAD(+) synthetase (275 aa).

Position 46–53 (46–53 (GISGGQDS)) interacts with ATP. Mg(2+) is bound at residue D52. Residue R140 participates in deamido-NAD(+) binding. T160 contributes to the ATP binding site. E165 lines the Mg(2+) pocket. Deamido-NAD(+)-binding residues include K173 and D180. Residues K189 and T211 each contribute to the ATP site. 260 to 261 (HK) contributes to the deamido-NAD(+) binding site.

Belongs to the NAD synthetase family. As to quaternary structure, homodimer.

It carries out the reaction deamido-NAD(+) + NH4(+) + ATP = AMP + diphosphate + NAD(+) + H(+). It participates in cofactor biosynthesis; NAD(+) biosynthesis; NAD(+) from deamido-NAD(+) (ammonia route): step 1/1. In terms of biological role, catalyzes the ATP-dependent amidation of deamido-NAD to form NAD. Uses ammonia as a nitrogen source. The sequence is that of NH(3)-dependent NAD(+) synthetase from Escherichia coli O17:K52:H18 (strain UMN026 / ExPEC).